The primary structure comprises 287 residues: Elongation factor Ts (287 aa).

The tract at residues 80–83 is involved in Mg(2+) ion dislocation from EF-Tu; that stretch reads TDFL.

Belongs to the EF-Ts family.

Its subcellular location is the cytoplasm. Associates with the EF-Tu.GDP complex and induces the exchange of GDP to GTP. It remains bound to the aminoacyl-tRNA.EF-Tu.GTP complex up to the GTP hydrolysis stage on the ribosome. The protein is Elongation factor Ts of Pseudomonas savastanoi pv. phaseolicola (strain 1448A / Race 6) (Pseudomonas syringae pv. phaseolicola (strain 1448A / Race 6)).